Reading from the N-terminus, the 267-residue chain is Glucosamine-6-phosphate deaminase (267 aa).

The active-site Proton acceptor; for enolization step is Asp72. The For ring-opening step role is filled by Asp141. The Proton acceptor; for ring-opening step role is filled by His143. Catalysis depends on Glu148, which acts as the For ring-opening step.

Belongs to the glucosamine/galactosamine-6-phosphate isomerase family. NagB subfamily. In terms of assembly, homohexamer.

It catalyses the reaction alpha-D-glucosamine 6-phosphate + H2O = beta-D-fructose 6-phosphate + NH4(+). It participates in amino-sugar metabolism; N-acetylneuraminate degradation; D-fructose 6-phosphate from N-acetylneuraminate: step 5/5. With respect to regulation, allosterically activated by N-acetylglucosamine 6-phosphate (GlcNAc6P). Catalyzes the reversible isomerization-deamination of glucosamine 6-phosphate (GlcN6P) to form fructose 6-phosphate (Fru6P) and ammonium ion. The sequence is that of Glucosamine-6-phosphate deaminase from Haemophilus ducreyi (strain 35000HP / ATCC 700724).